A 454-amino-acid polypeptide reads, in one-letter code: Bifunctional protein GlmU (454 aa).

The tract at residues 1 to 225 (MNIVILAAGM…IWETLGVNSK (225 aa)) is pyrophosphorylase. Residues 6–9 (LAAG), K20, Q71, 76–77 (GT), 98–100 (YGD), G135, E150, N165, and N223 each bind UDP-N-acetyl-alpha-D-glucosamine. D100 is a binding site for Mg(2+). Mg(2+) is bound at residue N223. The interval 226–246 (LQLAEVERIHQGNQARRLLEA) is linker. Positions 247–454 (GVTLLDPARI…WQRPVKQPKK (208 aa)) are N-acetyltransferase. UDP-N-acetyl-alpha-D-glucosamine contacts are provided by R329 and K347. The Proton acceptor role is filled by H359. Y362 and N373 together coordinate UDP-N-acetyl-alpha-D-glucosamine. Acetyl-CoA-binding positions include A376, 382 to 383 (NY), S401, A419, and R436.

The protein in the N-terminal section; belongs to the N-acetylglucosamine-1-phosphate uridyltransferase family. In the C-terminal section; belongs to the transferase hexapeptide repeat family. As to quaternary structure, homotrimer. Requires Mg(2+) as cofactor.

It localises to the cytoplasm. The enzyme catalyses alpha-D-glucosamine 1-phosphate + acetyl-CoA = N-acetyl-alpha-D-glucosamine 1-phosphate + CoA + H(+). It catalyses the reaction N-acetyl-alpha-D-glucosamine 1-phosphate + UTP + H(+) = UDP-N-acetyl-alpha-D-glucosamine + diphosphate. It participates in nucleotide-sugar biosynthesis; UDP-N-acetyl-alpha-D-glucosamine biosynthesis; N-acetyl-alpha-D-glucosamine 1-phosphate from alpha-D-glucosamine 6-phosphate (route II): step 2/2. Its pathway is nucleotide-sugar biosynthesis; UDP-N-acetyl-alpha-D-glucosamine biosynthesis; UDP-N-acetyl-alpha-D-glucosamine from N-acetyl-alpha-D-glucosamine 1-phosphate: step 1/1. The protein operates within bacterial outer membrane biogenesis; LPS lipid A biosynthesis. Its function is as follows. Catalyzes the last two sequential reactions in the de novo biosynthetic pathway for UDP-N-acetylglucosamine (UDP-GlcNAc). The C-terminal domain catalyzes the transfer of acetyl group from acetyl coenzyme A to glucosamine-1-phosphate (GlcN-1-P) to produce N-acetylglucosamine-1-phosphate (GlcNAc-1-P), which is converted into UDP-GlcNAc by the transfer of uridine 5-monophosphate (from uridine 5-triphosphate), a reaction catalyzed by the N-terminal domain. The sequence is that of Bifunctional protein GlmU from Cupriavidus necator (strain ATCC 17699 / DSM 428 / KCTC 22496 / NCIMB 10442 / H16 / Stanier 337) (Ralstonia eutropha).